A 765-amino-acid chain; its full sequence is Complement factor B (765 aa).

An N-terminal signal peptide occupies residues 1–25 (MGSNRCPRLGLVPLILGLLSGGVSM). Sushi domains lie at 35–100 (SPCS…ECKA), 101–160 (IRCP…ICDD), and 163–220 (GYCP…SCQD). 6 disulfide bridges follow: cysteine 37–cysteine 76, cysteine 62–cysteine 98, cysteine 103–cysteine 145, cysteine 131–cysteine 158, cysteine 165–cysteine 205, and cysteine 191–cysteine 218. Residues asparagine 122 and asparagine 142 are each glycosylated (N-linked (GlcNAc...) asparagine). Residues 270–469 (NIYLVLDGSD…NLEDVFFQML (200 aa)) enclose the VWFA domain. Mg(2+) contacts are provided by serine 278 and serine 280. The N-linked (GlcNAc...) asparagine glycan is linked to asparagine 285. Threonine 353 serves as a coordination point for Mg(2+). Asparagine 378 carries an N-linked (GlcNAc...) asparagine glycan. Positions 477 to 758 (LCGMVWEHKD…VLPWLKEKLK (282 aa)) constitute a Peptidase S1 domain. Cystine bridges form between cysteine 478–cysteine 596, cysteine 511–cysteine 527, cysteine 599–cysteine 615, cysteine 660–cysteine 686, and cysteine 699–cysteine 729. Catalysis depends on charge relay system residues histidine 526 and aspartate 576. The Charge relay system role is filled by serine 703.

Belongs to the peptidase S1 family. As to quaternary structure, monomer. Interacts with complement C3b; this interaction is dependent on the presence of Mg(2+). In terms of assembly, catalytic component of the C3 convertase of the alternative complement pathway, also named C3bBb, composed of complement factor B Bb and complement C3b. Catalytic component of the C5 convertase of the alternative complement pathway, also named C3bBb3b, composed of complement factor B Bb and additional molecules of complement C3b. Interacts to CFP; this interaction contributes to the stabilization of the active C3-convertase enzyme complex. Mg(2+) is required as a cofactor. It depends on Mn(2+) as a cofactor. In terms of processing, cleaved by CFD following activation of the alternative complement system, generating Ba and Bb chains. Cleavage and activation takes place when CFB is already associated with complement C3b.

The protein resides in the secreted. It localises to the cell surface. The catalysed reaction is Cleavage of Arg-|-Ser bond in complement component C3 alpha-chain to yield C3a and C3b, and Arg-|-Xaa bond in complement component C5 alpha-chain to yield C5a and C5b.. Its function is as follows. Precursor of the catalytic component of the C3 and C5 convertase complexes of the alternative pathway of the complement system, a cascade of proteins that leads to phagocytosis and breakdown of pathogens and signaling that strengthens the adaptive immune system. The alternative complement pathway acts as an amplification loop that enhances other complement pathways (classical, lectin and GZMK) by promoting formation of additional C3 and C5 convertases. CFB is cleaved and activated by CFD to generate Ba and Bb chains; Bb chain constituting the catalytic component of the C3 and C5 convertases. Serine protease component of the complement C3 and C5 convertase complexes of the alternative complement pathway. Following cleavage and activation by factor D (CFD), forms the C3 convertase together with complement C3b. As part of the C3 convertase, cleaves and activates C3 into C3a anaphylatoxin and C3b opsonin, the next components of the complement pathways. When an additional complement C3b molecule binds to the C3 convertase, forms the C5 convertase, which cleaves and activates C5 into C5a anaphylatoxin and C5b component of the membrane attack complex. Functionally, involved in proliferation and differentiation of preactivated B-lymphocytes, rapid spreading of peripheral blood monocytes, stimulation of lymphocyte blastogenesis and lysis of erythrocytes. The polypeptide is Complement factor B (CFB) (Sus scrofa (Pig)).